The chain runs to 882 residues: Pyruvate dehydrogenase E1 component (882 aa).

As to quaternary structure, homodimer. Part of the PDH complex, consisting of multiple copies of pyruvate dehydrogenase (E1), dihydrolipoamide acetyltransferase (E2) and lipoamide dehydrogenase (E3). Thiamine diphosphate serves as cofactor.

The catalysed reaction is N(6)-[(R)-lipoyl]-L-lysyl-[protein] + pyruvate + H(+) = N(6)-[(R)-S(8)-acetyldihydrolipoyl]-L-lysyl-[protein] + CO2. In terms of biological role, component of the pyruvate dehydrogenase (PDH) complex, that catalyzes the overall conversion of pyruvate to acetyl-CoA and CO(2). The chain is Pyruvate dehydrogenase E1 component (aceE) from Pseudomonas aeruginosa (strain ATCC 15692 / DSM 22644 / CIP 104116 / JCM 14847 / LMG 12228 / 1C / PRS 101 / PAO1).